We begin with the raw amino-acid sequence, 561 residues long: Zinc finger protein 37A (561 aa).

Residues 8 to 79 enclose the KRAB domain; it reads VSFRDVTVGF…EEKFPSQSHL (72 aa). Residues 146–168 form a C2H2-type 1; degenerate zinc finger; it reads FEYNECGKAFPENSLFLVHKRGY. The C2H2-type 2; degenerate zinc finger occupies 243–265; the sequence is IEYNECGTFFSEKLVLHLQQRTH. C2H2-type zinc fingers lie at residues 271-293, 299-321, 327-349, 355-377, 383-405, 411-433, 439-461, 467-489, 495-517, and 523-545; these read YECH…QRTH, YECH…QRIH, YGCH…QRTH, YECH…QKTH, YECY…QRIH, YECN…LRTH, YECI…LRRH, FGCN…QRTH, YGCN…HRTH, and YECN…QRIH.

This sequence belongs to the krueppel C2H2-type zinc-finger protein family.

It is found in the nucleus. May be involved in transcriptional regulation. The sequence is that of Zinc finger protein 37A (ZNF37A) from Homo sapiens (Human).